The following is a 364-amino-acid chain: Probable dual-specificity RNA methyltransferase RlmN (364 aa).

E107 acts as the Proton acceptor in catalysis. One can recognise a Radical SAM core domain in the interval 113-346 (HEYGNSVCVT…ATIRREQGSD (234 aa)). A disulfide bond links C120 and C351. 3 residues coordinate [4Fe-4S] cluster: C127, C131, and C134. Residues 177 to 178 (GE), S209, 232 to 234 (SLH), and N308 contribute to the S-adenosyl-L-methionine site. C351 (S-methylcysteine intermediate) is an active-site residue.

It belongs to the radical SAM superfamily. RlmN family. [4Fe-4S] cluster is required as a cofactor.

The protein localises to the cytoplasm. The enzyme catalyses adenosine(2503) in 23S rRNA + 2 reduced [2Fe-2S]-[ferredoxin] + 2 S-adenosyl-L-methionine = 2-methyladenosine(2503) in 23S rRNA + 5'-deoxyadenosine + L-methionine + 2 oxidized [2Fe-2S]-[ferredoxin] + S-adenosyl-L-homocysteine. It carries out the reaction adenosine(37) in tRNA + 2 reduced [2Fe-2S]-[ferredoxin] + 2 S-adenosyl-L-methionine = 2-methyladenosine(37) in tRNA + 5'-deoxyadenosine + L-methionine + 2 oxidized [2Fe-2S]-[ferredoxin] + S-adenosyl-L-homocysteine. Its function is as follows. Specifically methylates position 2 of adenine 2503 in 23S rRNA and position 2 of adenine 37 in tRNAs. Confers resistance to some classes of antibiotics. This chain is Probable dual-specificity RNA methyltransferase RlmN, found in Staphylococcus epidermidis (strain ATCC 12228 / FDA PCI 1200).